A 188-amino-acid chain; its full sequence is Putative manganese efflux pump MntP (188 aa).

The next 6 membrane-spanning stretches (helical) occupy residues Leu2 to Val22, Ile40 to Leu60, Ile66 to Ile86, Leu107 to Ile127, Leu133 to Phe153, and Leu167 to Phe187.

This sequence belongs to the MntP (TC 9.B.29) family.

The protein resides in the cell inner membrane. Its function is as follows. Probably functions as a manganese efflux pump. The sequence is that of Putative manganese efflux pump MntP from Parabacteroides distasonis (strain ATCC 8503 / DSM 20701 / CIP 104284 / JCM 5825 / NCTC 11152).